The following is an 869-amino-acid chain: Alanine--tRNA ligase (869 aa).

4 residues coordinate Zn(2+): histidine 559, histidine 563, cysteine 660, and histidine 664.

Belongs to the class-II aminoacyl-tRNA synthetase family. Zn(2+) is required as a cofactor.

It is found in the cytoplasm. The enzyme catalyses tRNA(Ala) + L-alanine + ATP = L-alanyl-tRNA(Ala) + AMP + diphosphate. Catalyzes the attachment of alanine to tRNA(Ala) in a two-step reaction: alanine is first activated by ATP to form Ala-AMP and then transferred to the acceptor end of tRNA(Ala). Also edits incorrectly charged Ser-tRNA(Ala) and Gly-tRNA(Ala) via its editing domain. This is Alanine--tRNA ligase from Herminiimonas arsenicoxydans.